The primary structure comprises 118 residues: uncharacterized protein (118 aa).

A helical transmembrane segment spans residues 41–61; it reads IFLLIIITIIFALTMYTSVQV.

It localises to the host membrane. This is an uncharacterized protein from Ostreid herpesvirus 1 (isolate France) (OsHV-1).